A 252-amino-acid polypeptide reads, in one-letter code: uncharacterized protein (252 aa).

Composition is skewed to polar residues over residues 108–122 (RTTM…SSSE) and 136–153 (MPNT…NSQS). The interval 108–252 (RTTMRQGRFP…LIWNDSSSSK (145 aa)) is disordered. Residues 154–172 (TEKEDAMYSKDNGFEDRSK) show a composition bias toward basic and acidic residues. Polar residues predominate over residues 201–226 (VKSTDSAFSGQENSEAFPSRTSNLGS).

The protein resides in the cytoplasm. Its subcellular location is the mitochondrion. The protein localises to the nucleus. This is an uncharacterized protein from Schizosaccharomyces pombe (strain 972 / ATCC 24843) (Fission yeast).